Reading from the N-terminus, the 604-residue chain is UvrABC system protein C (604 aa).

Residues 17–95 (AQPGVYRMLN…IKSLAPRYNI (79 aa)) form the GIY-YIG domain. Residues 204-239 (DEVLKTIEQKMFTASDQQDYEQAAQLRDQMQALRKI) form the UVR domain.

Belongs to the UvrC family. As to quaternary structure, interacts with UvrB in an incision complex.

The protein localises to the cytoplasm. Its function is as follows. The UvrABC repair system catalyzes the recognition and processing of DNA lesions. UvrC both incises the 5' and 3' sides of the lesion. The N-terminal half is responsible for the 3' incision and the C-terminal half is responsible for the 5' incision. This chain is UvrABC system protein C, found in Nitrosomonas europaea (strain ATCC 19718 / CIP 103999 / KCTC 2705 / NBRC 14298).